Here is a 177-residue protein sequence, read N- to C-terminus: Nucleoside triphosphate/diphosphate phosphatase (177 aa).

The active-site Proton donor is Arg23. Mg(2+) is bound by residues Asn87, Asp103, Asp105, Asp107, Asp120, and Glu123.

Belongs to the Ntdp family. Requires Mg(2+) as cofactor.

The enzyme catalyses a ribonucleoside 5'-triphosphate + H2O = a ribonucleoside 5'-diphosphate + phosphate + H(+). It carries out the reaction a ribonucleoside 5'-diphosphate + H2O = a ribonucleoside 5'-phosphate + phosphate + H(+). In terms of biological role, has nucleoside phosphatase activity towards nucleoside triphosphates and nucleoside diphosphates. This is Nucleoside triphosphate/diphosphate phosphatase from Streptococcus mutans serotype c (strain ATCC 700610 / UA159).